The following is a 480-amino-acid chain: Glycogen synthase (480 aa).

Residue Lys-15 participates in ADP-alpha-D-glucose binding.

It belongs to the glycosyltransferase 1 family. Bacterial/plant glycogen synthase subfamily.

The catalysed reaction is [(1-&gt;4)-alpha-D-glucosyl](n) + ADP-alpha-D-glucose = [(1-&gt;4)-alpha-D-glucosyl](n+1) + ADP + H(+). Its pathway is glycan biosynthesis; glycogen biosynthesis. Its function is as follows. Synthesizes alpha-1,4-glucan chains using ADP-glucose. The polypeptide is Glycogen synthase (Pasteurella multocida (strain Pm70)).